The chain runs to 290 residues: ATP synthase gamma chain (290 aa).

The protein belongs to the ATPase gamma chain family. In terms of assembly, F-type ATPases have 2 components, CF(1) - the catalytic core - and CF(0) - the membrane proton channel. CF(1) has five subunits: alpha(3), beta(3), gamma(1), delta(1), epsilon(1). CF(0) has three main subunits: a, b and c.

It localises to the cell inner membrane. Produces ATP from ADP in the presence of a proton gradient across the membrane. The gamma chain is believed to be important in regulating ATPase activity and the flow of protons through the CF(0) complex. The sequence is that of ATP synthase gamma chain from Dictyoglomus thermophilum (strain ATCC 35947 / DSM 3960 / H-6-12).